A 1153-amino-acid chain; its full sequence is Bifunctional dioxygenase (DOX)-epoxy alcohol synthase (EAS) (1153 aa).

Positions 46 to 56 (SSKESPSRKSS) are enriched in low complexity. Residues 46-113 (SSKESPSRKS…TQHGDGTYPT (68 aa)) form a disordered region. A compositionally biased stretch (polar residues) spans 57-74 (TIGQSTRNGSCQADTQKG). Residues 81–98 (EKPKPVKENPMKKLKEMS) are compositionally biased toward basic and acidic residues. Residues 177–525 (TDSLINELWE…DGKFDDDDLV (349 aa)) form a fatty acid alpha-dioxygenase region. Histidine 276 serves as a coordination point for heme b. Residue tyrosine 454 is part of the active site. Position 457 (histidine 457) interacts with heme b. The segment at 732 to 1153 (RVNITSYGGA…VTMRVMWDDE (422 aa)) is epoxy alcohol synthase. Cysteine 1086 is a heme binding site.

In the N-terminal section; belongs to the peroxidase family. This sequence in the C-terminal section; belongs to the cytochrome P450 family. In terms of assembly, homotetramer. Heme b is required as a cofactor. Requires heme as cofactor.

The enzyme catalyses (9Z)-octadecenoate + O2 = (8R)-hydroperoxy-(9Z)-octadecenoate. It carries out the reaction (9Z)-octadecenoate + O2 = 10-hydroperoxy-(8E)-octadecenoate. It catalyses the reaction (9Z,12Z)-octadecadienoate + O2 = (8E,10R,12Z)-10-hydroperoxyoctadeca-8,12-dienoate. The catalysed reaction is (9Z,12Z,15Z)-octadecatrienoate + O2 = (10R)-hydroperoxy-(8E,12Z,15Z)-octadecatrienoate. The enzyme catalyses (9Z,12Z,15Z)-octadecatrienoate + O2 = (8R)-hydroperoxy-(9Z,12Z,15Z)-octadecatrienoate. It carries out the reaction (11Z,14Z)-eicosadienoate + O2 = 12-hydroperoxy-(10E,14Z)-eicosadienoate. It catalyses the reaction (11Z,14Z,17Z)-eicosatrienoate + O2 = 12-hydroperoxy-(10E,14Z,17Z)-eicosatrienoate. The catalysed reaction is (12R,13S)-epoxy-(9Z)-octadecenoate + O2 = (12R,13S)-epoxy-(10R)-hydroperoxy-(8E)-octadecenoate. The enzyme catalyses (8E,10R,12Z)-10-hydroperoxyoctadeca-8,12-dienoate = (12S,13R)-epoxy-(10R)-hydroxy-(8E)-octadecenoate. It carries out the reaction (10R)-hydroperoxy-(8E,12Z,15Z)-octadecatrienoate = 12,13-epoxy-(10R)-hydroxy-(8E,15Z)-octadecadienoate. It catalyses the reaction 12-hydroperoxy-(10E,14Z)-eicosadienoate = 10,11-epoxy-12-hydroxy-(14Z)-eicosenoate. The catalysed reaction is 12-hydroperoxy-(10E,14Z,17Z)-eicosatrienoate = 14,15-epoxy-12-hydroxy-(10E,17Z)-eicosadienoate. The enzyme catalyses (13R)-hydroperoxy-(9Z,11E)-octadecadienoate = (12R,13R)-epoxy-(11S)-hydroxy-(9Z)-octadecenoate. It carries out the reaction (13S)-hydroperoxy-(9Z,11E)-octadecadienoate = (12R,13R)-epoxy-(11S)-hydroxy-(9Z)-octadecenoate. It catalyses the reaction 12-hydroperoxy-(10E,14Z)-eicosadienoate = 14,15-epoxy-12-hydroxy-(10E)-eicosenoate. The catalysed reaction is 12-hydroperoxy-(10E,14Z,17Z)-eicosatrienoate = 10,11-epoxy-12-hydroxy-(14Z,17Z)-eicosadienoate. In terms of biological role, bifunctional dioxygenase (DOX)-epoxy alcohol synthase (EAS) that converts linoleic acid (18:2n-6) sequentially to 10(R)-hydroperoxy-8(E),12(Z)-octadecadienoic acid (10R-HPODE) and 10R-HPODE further to 12 S(13R)-epoxy-10(R)-hydroxy-8(E)-octadecenoic acid as the end product. Oxygenation at C-10 occurs by retention of the pro-R hydrogen of C-8 of 18:2n-6, suggesting antarafacial hydrogen abstraction and oxygenation. The epoxy alcohol is formed from 10R-HPODE, likely by heterolytic cleavage of the dioxygen bond and subsequent intramolecular epoxidation of the 12(Z) double bond. The DOX domain is also able to oxygenate position C-8 of linoleic acid to produce 8(R)-hydroperoxy-8(E),12(Z)-octadecadienoic acid (8R-HPODE). Moreover, the DOX domain can oxygenate alpha-linolenic acid (18:3n-3) at C-8 or C-10 to produce respectively 8HOTrE and 10HOTrE, oleic acid (18:1n-9) at C-8 or C-10 to produce respectively 8-H(P)OME and 10-H(P)OME (with 8R stereoisomer to over 95%), eicosadienoic acid (20:2n-6) at C-10 or C-12 to produce respectively 10(11)-epoxy-12-hydroxy-14(Z)-eicosenoic acid and 14(15)-epoxy-12-hydroxy-10(E)-eicosenoic acid, as well as eicosatrienoic acid (20:3n-3) at C-10 or C-12 to produce respectively 10(11)-epoxy-12-hydroxy-14(Z),17(Z)-eicosadienoic acid and 14(15)-epoxy-12-hydroxy-14(Z),17(Z)-eicosadienoic acid. On the other side, the enzyme EAS domain can also catalyze the conversion of 10HOTrE into 12(13)-epoxy-10(R)-hydroxy-8(E),15(Z)-octadecadienoic acid, 13-R-HPODE into the stereoisomers of 12(13)-epoxy-11-hydroxy-9(Z)-octadecenoic acids (erythro/threo, 1:4), as well as 13S-HPODE into the stereoisomers of 12(13)-epoxy-11-hydroxy-9(Z)-octadecenoic acids (erythro/threo, 1:4) (EAS activity). Gamma-linolenic acid (18:3n-6) is not a substrate. The chain is Bifunctional dioxygenase (DOX)-epoxy alcohol synthase (EAS) from Pyricularia oryzae (strain 70-15 / ATCC MYA-4617 / FGSC 8958) (Rice blast fungus).